A 733-amino-acid chain; its full sequence is Methylmalonyl-CoA mutase large subunit (733 aa).

Positions 1–10 are enriched in acidic residues; the sequence is MRIPEFDDIE. The segment at 1-22 is disordered; it reads MRIPEFDDIELGAGGGPSGSAE. Positions 78, 81, 88, 90, 92, and 117 each coordinate (R)-methylmalonyl-CoA. Cob(II)alamin contacts are provided by F120 and A142. (R)-methylmalonyl-CoA is bound by residues T198 and Q200. V209 and R210 together coordinate cob(II)alamin. Residues R210, H247, R286, and S288 each coordinate (R)-methylmalonyl-CoA. Cob(II)alamin-binding residues include G336, E373, A376, G612, H613, D614, R615, S658, L660, G689, and T712. A B12-binding domain is found at 600–732; it reads RPRILVAKMG…KRLAADLGHE (133 aa).

The protein belongs to the methylmalonyl-CoA mutase family. Heterodimer of an alpha and a beta chain. Requires adenosylcob(III)alamin as cofactor.

It catalyses the reaction (R)-methylmalonyl-CoA = succinyl-CoA. Catalyzes the isomerization of succinyl-CoA to methylmalonyl-CoA during synthesis of propionate from tricarboxylic acid-cycle intermediates. This conversion most likely represents an important source of building blocks for polyketide antibiotic biosynthesis. It is unable to catalyze the conversion of isobutyryl-CoA into N-butyryl-CoA. This is Methylmalonyl-CoA mutase large subunit (mutB) from Streptomyces virginiae (Streptomyces cinnamonensis).